We begin with the raw amino-acid sequence, 239 residues long: UPF0641 membrane protein YHR140W (239 aa).

At 1–11 the chain is on the cytoplasmic side; that stretch reads MMSCLVPTRFT. A helical transmembrane segment spans residues 12-31; sequence LTLNTACLLTSTWGFVRATS. At 32 to 45 the chain is on the lumenal side; it reads VVLPPSLSKAGHKQ. A helical transmembrane segment spans residues 46–66; that stretch reads FLTIISIIATIINNAVNISNY. Residues 67–99 are Cytoplasmic-facing; the sequence is YIQRNNKMNLETKKKSDFISRHVTLPVSLVLES. Residues 100-120 form a helical membrane-spanning segment; that stretch reads IVATVYWPLRLFFVNLIMHGV. At 121–125 the chain is on the lumenal side; the sequence is ESTAK. A helical membrane pass occupies residues 126-146; that stretch reads TPFPMTVDMAIHLYPILYLLA. Over 147–162 the chain is Cytoplasmic; sequence DHYLSGSGTKFKLSNK. The helical transmembrane segment at 163-183 threads the bilayer; that stretch reads HAWLIVTSLAFSYFQYLAFLI. Residues 184–204 lie on the Lumenal side of the membrane; the sequence is DAGQGQAYPYPFLDVNEPYKS. Residues 205-225 form a helical membrane-spanning segment; sequence IIFVVVATITWAYYVFYQKFP. Topologically, residues 226–239 are cytoplasmic; it reads PKYIKKSAKKGDKN.

The protein belongs to the UPF0641 family.

It localises to the endoplasmic reticulum membrane. This Saccharomyces cerevisiae (strain ATCC 204508 / S288c) (Baker's yeast) protein is UPF0641 membrane protein YHR140W.